A 917-amino-acid chain; its full sequence is Serine/arginine repetitive matrix protein 1 (917 aa).

Methionine 1 bears the N-acetylmethionine mark. Positions 1 to 151 (MDAGFFRGTS…ASMKKQDEDK (151 aa)) are necessary for DNA and RNA-binding. Positions 1 to 156 (MDAGFFRGTS…QDEDKDKRDK (156 aa)) are necessary for mRNA 3'-end cleavage and cytoplasmic accumulation. Residue arginine 7 is modified to Citrulline. Residues 27–126 (QLKFAECLEK…AGIPSAFLEL (100 aa)) form the PWI domain. Lysine 127 participates in a covalent cross-link: Glycyl lysine isopeptide (Lys-Gly) (interchain with G-Cter in SUMO2). Over residues 139-170 (EKLASMKKQDEDKDKRDKEEKESSREKRERSR) the composition is skewed to basic and acidic residues. Positions 139–917 (EKLASMKKQD…MRKAQVSPQS (779 aa)) are disordered. Lysine 140 bears the N6-acetyllysine mark. Over residues 171–207 (SPRRRKSRSPSPRRRSSPVRRERKRSHSRSPRHRTKS) the composition is skewed to basic residues. The segment covering 214–234 (PEKKEKTPELPEPSVKVKEPS) has biased composition (basic and acidic residues). Phosphothreonine is present on threonine 220. At serine 227 the chain carries Phosphoserine. Lysine 231 is covalently cross-linked (Glycyl lysine isopeptide (Lys-Gly) (interchain with G-Cter in SUMO1); alternate). Residue lysine 231 forms a Glycyl lysine isopeptide (Lys-Gly) (interchain with G-Cter in SUMO2); alternate linkage. Residues serine 234 and serine 240 each carry the phosphoserine modification. A Phosphothreonine modification is found at threonine 241. The segment covering 246-275 (KVPKPEPIPEPKEPSPEKNSKKEKEKEKTR) has biased composition (basic and acidic residues). Lysine 249 participates in a covalent cross-link: Glycyl lysine isopeptide (Lys-Gly) (interchain with G-Cter in SUMO2). Phosphoserine is present on serine 260. 2 stretches are compositionally biased toward basic residues: residues 276–329 (PRSR…RTPP) and 336–351 (PRHR…RRRS). Residues 300–702 (RRHRSRSRSY…NKRHSPSPRP (403 aa)) form a necessary for speckles and matrix localization region. The segment covering 352–368 (SASLSGSSSSSSSSRSR) has biased composition (low complexity). Serine 389, serine 391, serine 393, and serine 402 each carry phosphoserine. Threonine 406 is modified (phosphothreonine). Position 414 is a phosphoserine (serine 414). Threonine 416 is modified (phosphothreonine). Residues serine 420, serine 429, serine 431, and serine 436 each carry the phosphoserine modification. A compositionally biased stretch (polar residues) spans 428 to 438 (VSVSPGRTSGK). A Glycyl lysine isopeptide (Lys-Gly) (interchain with G-Cter in SUMO2) cross-link involves residue lysine 447. A phosphoserine mark is found at serine 450 and serine 452. Residue lysine 459 forms a Glycyl lysine isopeptide (Lys-Gly) (interchain with G-Cter in SUMO2) linkage. Residues serine 463 and serine 465 each carry the phosphoserine modification. Lysine 472 participates in a covalent cross-link: Glycyl lysine isopeptide (Lys-Gly) (interchain with G-Cter in SUMO2). Residue serine 478 is modified to Phosphoserine. Positions 478 to 501 (SVQQRRQYRRQNQQSSSDSGSSSS) are enriched in low complexity. The span at 503–518 (EDERPKRSHVKNGEVG) shows a compositional bias: basic and acidic residues. Serine 524, serine 526, serine 528, serine 530, serine 532, serine 563, and serine 565 each carry phosphoserine. The span at 557–574 (SGRRRRSPSPPPTRRRRS) shows a compositional bias: basic residues. At threonine 569 the chain carries Phosphothreonine. Phosphoserine occurs at positions 574 and 576. Residues 581–606 (PRRRRTPTPPPRRRTPSPPPRRRSPS) show a composition bias toward basic residues. Phosphothreonine is present on residues threonine 586, threonine 588, and threonine 595. Serine 597 is modified (phosphoserine). Residues 607 to 619 (PRRYSPPIQRRYS) show a composition bias toward low complexity. Tyrosine 610 carries the post-translational modification Phosphotyrosine. 3 positions are modified to phosphoserine: serine 611, serine 619, and serine 621. Phosphothreonine is present on threonine 628. Serine 630, serine 640, serine 642, serine 650, and serine 652 each carry phosphoserine. Residues 635 to 650 (PKRRASPSPPPKRRVS) are compositionally biased toward basic residues. The span at 663–677 (TKRRSPSLSSKHRKG) shows a compositional bias: basic residues. Residues 699 to 713 (SPRPRAPQTSSPPPV) show a composition bias toward pro residues. Serine 708, serine 709, serine 718, serine 720, serine 726, and serine 728 each carry phosphoserine. Composition is skewed to low complexity over residues 714–732 (RRGA…PSTR), 749–772 (AASP…SPEP), and 782–799 (SPVQ…AVPV). Threonine 731 bears the Phosphothreonine mark. A phosphoserine mark is found at serine 751, serine 753, serine 761, serine 765, serine 767, serine 769, serine 782, serine 786, serine 788, and serine 790. The residue at position 791 (threonine 791) is a Phosphothreonine. Phosphoserine occurs at positions 794 and 804. Position 806 is a phosphothreonine (threonine 806). A phosphoserine mark is found at serine 808, serine 810, and serine 815. Positions 822 to 847 (KKKKKKKDKKHKKDKKHKKHKKHKKE) are enriched in basic residues. A compositionally biased stretch (low complexity) spans 850–879 (VAAAAAAAVTPAAIAAATTTLAQEEPVAAP). Residue lysine 882 forms a Glycyl lysine isopeptide (Lys-Gly) (interchain with G-Cter in SUMO2) linkage. Threonine 885 carries the post-translational modification Phosphothreonine. Serine 887 bears the Phosphoserine mark. Over residues 895-905 (DLEKHLREKAL) the composition is skewed to basic and acidic residues. Serine 914 carries the post-translational modification Phosphoserine.

Belongs to the splicing factor SR family. As to quaternary structure, identified in the spliceosome C complex. Found in a pre-mRNA splicing complex with SFRS4, SFRS5, SNRP70, SNRPA1, SRRM1 and SRRM2. Component of the minor spliceosome, which splices U12-type introns. Found in a pre-mRNA exonic splicing enhancer (ESE) complex with SNRP70, SNRPA1, SRRM1 and TRA2B/SFRS10. Found in a mRNA splicing-dependent exon junction complex (EJC) with DEK, PRPF8, NCBP1, RBM8A, RNPS1, SRRM1 and ALYREF/THOC4. Interacts with DDX39B, CPSF1, RBM8A, RNPS1, and ALYREF/THOC4. Seems to be a compound of RNA export complexes that are released from speckles in a ATP-dependent manner. Post-translationally, phosphorylated on multiple serine and threonine residues by DYRK3 during the G2-to-M transition, after the nuclear-envelope breakdown. Phosphorylation by DYRK3 promotes disassembly of nuclear speckles. Citrullinated by PADI4.

Functionally, part of pre- and post-splicing multiprotein mRNP complexes. As a component of the minor spliceosome, involved in the splicing of U12-type introns in pre-mRNAs. Involved in numerous pre-mRNA processing events. Promotes constitutive and exonic splicing enhancer (ESE)-dependent splicing activation by bridging together sequence-specific (SR family proteins, SFRS4, SFRS5 and TRA2B/SFRS10) and basal snRNP (SNRP70 and SNRPA1) factors of the spliceosome. Stimulates mRNA 3'-end cleavage independently of the formation of an exon junction complex. Binds both pre-mRNA and spliced mRNA 20-25 nt upstream of exon-exon junctions. Binds RNA and DNA with low sequence specificity and has similar preference for either double- or single-stranded nucleic acid substrates. This is Serine/arginine repetitive matrix protein 1 (SRRM1) from Pongo abelii (Sumatran orangutan).